The primary structure comprises 456 residues: Aromatic amino acid transport protein AroP (456 aa).

The Cytoplasmic portion of the chain corresponds to 1-18 (MEGQQHGEQLKRGLKNRH). A helical transmembrane segment spans residues 19–39 (IQLIALGGAIGTGLFLGSASV). Over 40 to 41 (IQ) the chain is Periplasmic. A helical transmembrane segment spans residues 42–62 (SAGPGIILGYAIAGFIAFLIM). The Cytoplasmic portion of the chain corresponds to 63 to 85 (RQLGEMVVEEPVAGSFSHFAYKY). Residues 86-106 (WGSFAGFASGWNYWVLYVLVA) traverse the membrane as a helical segment. The Periplasmic segment spans residues 107–116 (MAELTAVGKY). Residues 117-137 (IQFWYPEIPTWVSAAVFFVVI) form a helical membrane-spanning segment. The Cytoplasmic portion of the chain corresponds to 138–154 (NAINLTNVKVFGEMEFW). Residues 155–175 (FAIIKVIAVVAMIIFGAWLLF) form a helical membrane-spanning segment. The Periplasmic segment spans residues 176 to 200 (SGNGGPQASVSNLWDQGGFLPHGFT). Residues 201–221 (GLVMMMAIIMFSFGGLELVGI) traverse the membrane as a helical segment. Residues 222–239 (TAAEADNPEQSIPKATNQ) are Cytoplasmic-facing. A helical membrane pass occupies residues 240 to 260 (VIYRILIFYIGSLAVLLSLMP). The Periplasmic portion of the chain corresponds to 261-270 (WTRVTADTSP). Residues 271–291 (FVLIFHELGDTFVANALNIVV) form a helical membrane-spanning segment. Over 292 to 332 (LTAALSVYNSCVYCNSRMLFGLAQQGNAPKALASVDKRGVP) the chain is Cytoplasmic. A helical membrane pass occupies residues 333 to 353 (VNTILVSALVTALCVLINYLA). The Periplasmic segment spans residues 354-357 (PESA). A helical membrane pass occupies residues 358-378 (FGLLMALVVSALVINWAMISL). Over 379 to 398 (AHMKFRRAKQEQGVVTRFPA) the chain is Cytoplasmic. A helical transmembrane segment spans residues 399–419 (LLYPLGNWICLLFMAAVLVIM). Residues 420–424 (LMTPG) are Periplasmic-facing. A helical transmembrane segment spans residues 425 to 445 (MAISVYLIPVWLIVLGIGYLF). Over 446 to 456 (KEKTAKAVKAH) the chain is Cytoplasmic.

This sequence belongs to the amino acid-polyamine-organocation (APC) superfamily. Amino acid transporter (AAT) (TC 2.A.3.1) family.

It is found in the cell inner membrane. It carries out the reaction L-phenylalanine(in) + H(+)(in) = L-phenylalanine(out) + H(+)(out). It catalyses the reaction L-tryptophan(in) + H(+)(in) = L-tryptophan(out) + H(+)(out). The catalysed reaction is L-tyrosine(in) + H(+)(in) = L-tyrosine(out) + H(+)(out). Permease that is involved in the active transport across the cytoplasmic membrane of all three aromatic amino acids, phenylalanine, tyrosine and tryptophan. The polypeptide is Aromatic amino acid transport protein AroP (aroP) (Escherichia coli O6:H1 (strain CFT073 / ATCC 700928 / UPEC)).